The following is a 425-amino-acid chain: UDP-N-acetylglucosamine 1-carboxyvinyltransferase (425 aa).

22-23 (KN) is a phosphoenolpyruvate binding site. A UDP-N-acetyl-alpha-D-glucosamine-binding site is contributed by Arg-98. The active-site Proton donor is Cys-122. 2-(S-cysteinyl)pyruvic acid O-phosphothioketal is present on Cys-122. UDP-N-acetyl-alpha-D-glucosamine is bound by residues 127 to 131 (RPVDQ), Asp-313, and Ile-335.

This sequence belongs to the EPSP synthase family. MurA subfamily.

Its subcellular location is the cytoplasm. The catalysed reaction is phosphoenolpyruvate + UDP-N-acetyl-alpha-D-glucosamine = UDP-N-acetyl-3-O-(1-carboxyvinyl)-alpha-D-glucosamine + phosphate. It functions in the pathway cell wall biogenesis; peptidoglycan biosynthesis. Its function is as follows. Cell wall formation. Adds enolpyruvyl to UDP-N-acetylglucosamine. The sequence is that of UDP-N-acetylglucosamine 1-carboxyvinyltransferase from Xylella fastidiosa (strain M23).